Consider the following 414-residue polypeptide: Serine hydroxymethyltransferase (414 aa).

Residues Leu121 and 125 to 127 each bind (6S)-5,6,7,8-tetrahydrofolate; that span reads GHL. At Lys229 the chain carries N6-(pyridoxal phosphate)lysine.

This sequence belongs to the SHMT family. In terms of assembly, homodimer. Pyridoxal 5'-phosphate is required as a cofactor.

The protein resides in the cytoplasm. The catalysed reaction is (6R)-5,10-methylene-5,6,7,8-tetrahydrofolate + glycine + H2O = (6S)-5,6,7,8-tetrahydrofolate + L-serine. It participates in one-carbon metabolism; tetrahydrofolate interconversion. The protein operates within amino-acid biosynthesis; glycine biosynthesis; glycine from L-serine: step 1/1. In terms of biological role, catalyzes the reversible interconversion of serine and glycine with tetrahydrofolate (THF) serving as the one-carbon carrier. This reaction serves as the major source of one-carbon groups required for the biosynthesis of purines, thymidylate, methionine, and other important biomolecules. Also exhibits THF-independent aldolase activity toward beta-hydroxyamino acids, producing glycine and aldehydes, via a retro-aldol mechanism. This Verminephrobacter eiseniae (strain EF01-2) protein is Serine hydroxymethyltransferase.